Consider the following 337-residue polypeptide: MSRIAVIGAGAWGTALAIVLGRRGGHAVRLWAYEQEVVASILARRTNDLFLPEASIPATVTVTDSLTDALNGAEIVLSVMPSHHVRRLFTQMLPHLSDDMVFVSATKGVEDQTYLRMTEVIEEVVTPRFSPRLVAVSGPTFAKEVAKGDPTAITAASSDEDLARTVQHEFSDPRFRVYTNRDVVGVELGGALKNVIAIAAGICDGLELGHNSVAALVTRGLAEITRLSLACGGHIETMAGLAGLGDLVLTCTGGLSRNRTVGVELGKGRKLADIIAGMRGMVAEGVLTTNAAIGLANKHGVEMPITQQMHAILHQGKSPSDAIRELMSRPSTTEVWL.

Residues Trp12 and Lys107 each coordinate NADPH. Sn-glycerol 3-phosphate contacts are provided by Lys107, Gly138, and Thr140. Residue Ala142 coordinates NADPH. The sn-glycerol 3-phosphate site is built by Lys193, Asp246, Ser256, Arg257, and Asn258. Lys193 serves as the catalytic Proton acceptor. Residue Arg257 coordinates NADPH. Val282 and Glu284 together coordinate NADPH.

This sequence belongs to the NAD-dependent glycerol-3-phosphate dehydrogenase family.

It is found in the cytoplasm. The catalysed reaction is sn-glycerol 3-phosphate + NAD(+) = dihydroxyacetone phosphate + NADH + H(+). The enzyme catalyses sn-glycerol 3-phosphate + NADP(+) = dihydroxyacetone phosphate + NADPH + H(+). The protein operates within membrane lipid metabolism; glycerophospholipid metabolism. Its function is as follows. Catalyzes the reduction of the glycolytic intermediate dihydroxyacetone phosphate (DHAP) to sn-glycerol 3-phosphate (G3P), the key precursor for phospholipid synthesis. The protein is Glycerol-3-phosphate dehydrogenase [NAD(P)+] of Koribacter versatilis (strain Ellin345).